An 83-amino-acid chain; its full sequence is Cell division topological specificity factor (83 aa).

It belongs to the MinE family.

In terms of biological role, prevents the cell division inhibition by proteins MinC and MinD at internal division sites while permitting inhibition at polar sites. This ensures cell division at the proper site by restricting the formation of a division septum at the midpoint of the long axis of the cell. This is Cell division topological specificity factor from Acidithiobacillus ferrooxidans (strain ATCC 23270 / DSM 14882 / CIP 104768 / NCIMB 8455) (Ferrobacillus ferrooxidans (strain ATCC 23270)).